Here is a 255-residue protein sequence, read N- to C-terminus: H-2 class II histocompatibility antigen, E-D alpha chain (255 aa).

The signal sequence occupies residues 1–25; the sequence is MATIGALVLRFFFIAVLMSSQKSWA. Positions 26–109 are alpha-1; it reads IKEEHTIIQA…ERSNNTPDAN (84 aa). The Extracellular portion of the chain corresponds to 26–216; the sequence is IKEEHTIIQA…EKTLLPETKE (191 aa). The segment at 110-203 is alpha-2; sequence VAPEVTVLSR…GLEEPLRKTW (94 aa). The Ig-like C1-type domain occupies 112–204; sequence PEVTVLSRSP…LEEPLRKTWE (93 aa). Cysteines 132 and 188 form a disulfide. N-linked (GlcNAc...) asparagine glycosylation occurs at asparagine 143. Residues 204–216 are connecting peptide; it reads EFEEKTLLPETKE. A helical transmembrane segment spans residues 217 to 242; it reads NVMCALGLFVGLVGIVVGIILIMKGI. The Cytoplasmic segment spans residues 243–255; the sequence is KKRNVVERRQGAL.

Belongs to the MHC class II family.

The protein localises to the membrane. This Mus musculus (Mouse) protein is H-2 class II histocompatibility antigen, E-D alpha chain (H2-Ea).